The sequence spans 518 residues: MPTVVVMDVSLSMTRPVSVEGSEEYQRKHLAAHGLTMLFEHMATNYKLEFTALVVFSSLWELMVPFTRDYNTLQEALSNMDDYDKTCLESALVGVCNIVQQEWGGAIPCQVVLVTDGCLGIGRGSLRHSLATHNQRGESNRFPLPFPFPSKLYIMCMANLEELQSTDSLDCLERLIDLNNGEGQIFTIDGPLCLKNVQSMFGKLIDLAYTPFHAVLKCGHLTADVQVFPRPEPFVIDEEIDPIPKVINTDLEIVGFIDIADISSPPVLSRHLVLPIALNKEGDEVGTGITDDNEDENSANQIAGKIPNFCVLLHGSLKVEGMVAIVQLGPEWHGMLYSQADSKKKSNLMMSLFEPGPEPLPWLGKMVQLGPISDAKENPYGEDDNKSPFPLQPKNKRSYAQNVTVWIKPSGLQTDVQKILRNARKLPEKTQTFYKELNRLRKAALAFGFLDLLKGVADMLERECTLLPDTAHPDAAFQLTHAAQQLKLASTGTSEYAGYDHNITPLQTDFSGSSAERI.

One can recognise a VWFA domain in the interval 2–204; sequence PTVVVMDVSL…KNVQSMFGKL (203 aa). Positions 10, 12, and 86 each coordinate Mg(2+). K418 is modified (N6-acetyllysine).

It belongs to the Integrator subunit 14 family. In terms of assembly, component of the Integrator complex, composed of core subunits INTS1, INTS2, INTS3, INTS4, INTS5, INTS6, INTS7, INTS8, INTS9/RC74, INTS10, INTS11/CPSF3L, INTS12, INTS13, INTS14 and INTS15. The core complex associates with protein phosphatase 2A subunits PPP2CA and PPP2R1A, to form the Integrator-PP2A (INTAC) complex. INTS14 is part of the tail subcomplex, composed of INTS10, INTS13, INTS14 and INTS15.

The protein localises to the nucleus. Component of the integrator complex, a multiprotein complex that terminates RNA polymerase II (Pol II) transcription in the promoter-proximal region of genes. The integrator complex provides a quality checkpoint during transcription elongation by driving premature transcription termination of transcripts that are unfavorably configured for transcriptional elongation: the complex terminates transcription by (1) catalyzing dephosphorylation of the C-terminal domain (CTD) of Pol II subunit POLR2A/RPB1 and SUPT5H/SPT5, (2) degrading the exiting nascent RNA transcript via endonuclease activity and (3) promoting the release of Pol II from bound DNA. The integrator complex is also involved in terminating the synthesis of non-coding Pol II transcripts, such as enhancer RNAs (eRNAs), small nuclear RNAs (snRNAs), telomerase RNAs and long non-coding RNAs (lncRNAs). Within the integrator complex, INTS14 is part of the integrator tail module that acts as a platform for the recruitment of transcription factors at promoters. This chain is Integrator complex subunit 14, found in Bos taurus (Bovine).